The chain runs to 307 residues: 4-hydroxythreonine-4-phosphate dehydrogenase (307 aa).

Substrate is bound by residues histidine 126 and threonine 127. A divalent metal cation contacts are provided by histidine 156, histidine 195, and histidine 251. 3 residues coordinate substrate: lysine 259, asparagine 268, and arginine 277.

Belongs to the PdxA family. As to quaternary structure, homodimer. Requires Zn(2+) as cofactor. Mg(2+) is required as a cofactor. Co(2+) serves as cofactor.

It localises to the cytoplasm. The enzyme catalyses 4-(phosphooxy)-L-threonine + NAD(+) = 3-amino-2-oxopropyl phosphate + CO2 + NADH. It functions in the pathway cofactor biosynthesis; pyridoxine 5'-phosphate biosynthesis; pyridoxine 5'-phosphate from D-erythrose 4-phosphate: step 4/5. In terms of biological role, catalyzes the NAD(P)-dependent oxidation of 4-(phosphooxy)-L-threonine (HTP) into 2-amino-3-oxo-4-(phosphooxy)butyric acid which spontaneously decarboxylates to form 3-amino-2-oxopropyl phosphate (AHAP). The chain is 4-hydroxythreonine-4-phosphate dehydrogenase from Helicobacter pylori (strain P12).